Reading from the N-terminus, the 59-residue chain is Dendroaspin (59 aa).

4 disulfides stabilise this stretch: cysteine 3–cysteine 22, cysteine 17–cysteine 37, cysteine 39–cysteine 51, and cysteine 52–cysteine 57. Residues 43-45 (RGD) carry the Cell attachment site motif.

It belongs to the three-finger toxin family. Short-chain subfamily. Antiplatelet toxin sub-subfamily. As to expression, expressed by the venom gland.

It localises to the secreted. Its function is as follows. Inhibits ADP-induced platelet aggregation and inhibits the binding of purified platelet fibrinogen receptor alpha-IIb/beta-3 (ITGA2B/ITGB3) to immobilized fibrinogen. Has also been described to inhibit cell adhesion to fibrinogen, fibronectin, laminin and collagen. This is Dendroaspin from Dendroaspis jamesoni kaimosae (Eastern Jameson's mamba).